The following is a 273-amino-acid chain: SAGA-associated factor 29 homolog B (273 aa).

Residues 128 to 273 (EAYASLKGEQ…VVALPEGHRQ (146 aa)) form the SGF29 C-terminal domain. Histone H3K4me3 N-terminus binding stretches follow at residues 171–173 (DEE) and 220–223 (GTTA). The interval 245–248 (FDDD) is histone H3K4me3 binding.

The protein belongs to the SGF29 family. Expressed in roots, rosette leaves, cauline leaves, stems and flowers.

It localises to the nucleus. Functionally, chromatin reader component of the transcription regulatory histone acetylation (HAT) complex SAGA. This chain is SAGA-associated factor 29 homolog B, found in Arabidopsis thaliana (Mouse-ear cress).